The sequence spans 736 residues: Putative ATP-dependent RNA helicase CG14443 (736 aa).

Disordered stretches follow at residues 32-58, 73-166, 183-237, and 265-296; these read TKSSIWGSSASDISGQSRSLKSSSSVL, GIEG…GERP, NSFK…NSWR, and SFTRSRSPHRNTLCYQDQSKNPSRPSNYNTWK. Composition is skewed to low complexity over residues 34-58 and 125-160; these read SSIWGSSASDISGQSRSLKSSSSVL and SSESAHSSGSESSSSDSNSGSSSDSDSTTGSSSHGS. Positions 190-199 are enriched in basic and acidic residues; that stretch reads TSRENKESRS. Over residues 277–296 the composition is skewed to polar residues; that stretch reads LCYQDQSKNPSRPSNYNTWK. Positions 330–358 match the Q motif motif; sequence LSFERSGFNATILQQLEDQGYDGPTPIQA. Positions 361–534 constitute a Helicase ATP-binding domain; the sequence is WSIAKEGKNI…NKFLGQYTAI (174 aa). 374–381 is a binding site for ATP; the sequence is SGKGTGKT. Residues 482–485 carry the DEAD box motif; it reads DNID. A Helicase C-terminal domain is found at 561-719; the sequence is KVERLMKELT…LLQLAEEKMF (159 aa).

Belongs to the DEAD box helicase family.

It carries out the reaction ATP + H2O = ADP + phosphate + H(+). Its function is as follows. Probable ATP-binding RNA helicase. The chain is Putative ATP-dependent RNA helicase CG14443 from Drosophila melanogaster (Fruit fly).